Consider the following 518-residue polypeptide: Glutamate--cysteine ligase (518 aa).

Belongs to the glutamate--cysteine ligase type 1 family. Type 1 subfamily.

It carries out the reaction L-cysteine + L-glutamate + ATP = gamma-L-glutamyl-L-cysteine + ADP + phosphate + H(+). It participates in sulfur metabolism; glutathione biosynthesis; glutathione from L-cysteine and L-glutamate: step 1/2. This is Glutamate--cysteine ligase from Klebsiella pneumoniae subsp. pneumoniae (strain ATCC 700721 / MGH 78578).